Consider the following 362-residue polypeptide: MTQCYAEITGWGKCLPPATLSNHDLSTFLDTSDEWIQSRTGIEQRRISHVNTSDLATVAAQHAIACAGVSVEEIDLIIVATCSPDSLIPNIASRVQQNLGIPSAAAFDLNAACTGFLYGLETATRLMQASHYRHALVIGAERLSFYLDWTKRDTAVLFGDGAGAVVLSKTEQKVGLQDAQIGCDAQGRDILAVPKFGTAMDRFDADNGYWAFDFVGKEIFKRAVRGMGAAAQQVLARSGLSTEEIDVVIPHQANIRIIQTLCDLAGIAQDKAFVNIHRYGNTSAATVPIALCEALEQGKIKPHDDLLVAAFGAGLTWGAGHIRWGERITPLGKSDAQLPSCDHTALDLLSKAIEHCKRHQSE.

Active-site residues include cysteine 113 and histidine 251. Residues 252–256 (QANIR) are ACP-binding. Asparagine 281 is an active-site residue.

This sequence belongs to the thiolase-like superfamily. FabH family. As to quaternary structure, homodimer.

Its subcellular location is the cytoplasm. The catalysed reaction is malonyl-[ACP] + acetyl-CoA + H(+) = 3-oxobutanoyl-[ACP] + CO2 + CoA. The protein operates within lipid metabolism; fatty acid biosynthesis. Its function is as follows. Catalyzes the condensation reaction of fatty acid synthesis by the addition to an acyl acceptor of two carbons from malonyl-ACP. Catalyzes the first condensation reaction which initiates fatty acid synthesis and may therefore play a role in governing the total rate of fatty acid production. Possesses both acetoacetyl-ACP synthase and acetyl transacylase activities. Its substrate specificity determines the biosynthesis of branched-chain and/or straight-chain of fatty acids. This is Beta-ketoacyl-[acyl-carrier-protein] synthase III 2 from Vibrio cholerae serotype O1 (strain ATCC 39315 / El Tor Inaba N16961).